The following is a 556-amino-acid chain: Putative solute carrier family 22 member 31 (556 aa).

The Cytoplasmic segment spans residues 1 to 23 (MEQEARVLRAAGGFGRARRLLAS). Residues 24 to 44 (ASWVPCIVLGLVLSSEELLTA) form a helical membrane-spanning segment. Topologically, residues 45 to 128 (QPAPHCRPDP…WNLVCGDGWK (84 aa)) are extracellular. The chain crosses the membrane as a helical span at residues 129–149 (VPLEQVSHLLGWLLGCVILGA). Topologically, residues 150-157 (GCDRFGRR) are cytoplasmic. A helical membrane pass occupies residues 158 to 178 (AVFVASLVLTTGLGASEALAA). Residues 179–182 (SFPT) lie on the Extracellular side of the membrane. The helical transmembrane segment at 183–203 (LLVLRLLHGGTLAGALLALYL) threads the bilayer. Topologically, residues 204–218 (ARLELCDPPHRLAFS) are cytoplasmic. A helical membrane pass occupies residues 219 to 239 (MGAGLFSVVGTLLLPGLAALV). At 240-246 (QDWRLLQ) the chain is on the extracellular side. The chain crosses the membrane as a helical span at residues 247-267 (GLGALMSGLLLLFWGFPALFP). Topologically, residues 268–339 (ESPCWLLATG…LRTRVTWRNG (72 aa)) are cytoplasmic. The chain crosses the membrane as a helical span at residues 340–357 (LILGFSSLVGGGIRASFR). At 358–366 (RSLAPQVPT) the chain is on the extracellular side. Residues 367–387 (FYLPYFLEAGLEAAALVFLLL) traverse the membrane as a helical segment. Residues 388–395 (TADCCGRR) lie on the Cytoplasmic side of the membrane. A helical transmembrane segment spans residues 396–416 (PVLLLGTMVTGLASLLLLAGA). Residues 417–420 (QYLP) lie on the Extracellular side of the membrane. A helical membrane pass occupies residues 421 to 441 (GWTVLFLSVLGLLASRAVSAL). The Cytoplasmic segment spans residues 442–448 (SSLFAAE). Residues 449 to 469 (VFPTVIRGAGLGLVLGAGFLG) form a helical membrane-spanning segment. Residues 470 to 483 (QAAGPLDTLHGRQG) lie on the Extracellular side of the membrane. A helical membrane pass occupies residues 484 to 504 (FFLQQVVFASLAVLALLCVLL). The Cytoplasmic portion of the chain corresponds to 505 to 556 (LPESRSRGLPQSLQDADRLRRSPLLRGRPRQDHLPLLPPSNSYWAGHTPEQH). The disordered stretch occupies residues 524 to 556 (RRSPLLRGRPRQDHLPLLPPSNSYWAGHTPEQH).

It belongs to the major facilitator (TC 2.A.1) superfamily. Organic cation transporter (TC 2.A.1.19) family.

It is found in the membrane. Functionally, organic anion transporter that mediates the uptake of ions. In Homo sapiens (Human), this protein is Putative solute carrier family 22 member 31.